Consider the following 51-residue polypeptide: MAAHKSFRIKQKLAKKLKQNRSVPQWVRLRTGNTIRYNAKRRHWRRTKLKL.

The protein belongs to the eukaryotic ribosomal protein eL39 family.

The polypeptide is Large ribosomal subunit protein eL39 (RpL39) (Drosophila melanogaster (Fruit fly)).